Consider the following 333-residue polypeptide: Anthranilate phosphoribosyltransferase (333 aa).

5-phospho-alpha-D-ribose 1-diphosphate-binding positions include G81, 84–85, T89, 91–94, 109–117, and A121; these read GD, NIST, and KHGNRSVSS. Position 81 (G81) interacts with anthranilate. Mg(2+) is bound at residue S93. Residue N112 coordinates anthranilate. R167 contacts anthranilate. Mg(2+) is bound by residues D225 and E226.

The protein belongs to the anthranilate phosphoribosyltransferase family. In terms of assembly, homodimer. Mg(2+) is required as a cofactor.

It catalyses the reaction N-(5-phospho-beta-D-ribosyl)anthranilate + diphosphate = 5-phospho-alpha-D-ribose 1-diphosphate + anthranilate. It participates in amino-acid biosynthesis; L-tryptophan biosynthesis; L-tryptophan from chorismate: step 2/5. In terms of biological role, catalyzes the transfer of the phosphoribosyl group of 5-phosphorylribose-1-pyrophosphate (PRPP) to anthranilate to yield N-(5'-phosphoribosyl)-anthranilate (PRA). This is Anthranilate phosphoribosyltransferase from Haemophilus influenzae (strain 86-028NP).